The primary structure comprises 539 residues: Putative cysteine ligase BshC (539 aa).

Residues 455–475 are a coiled coil; sequence LQKNAAFIQDQLLFLERTVTK.

The protein belongs to the BshC family.

Involved in bacillithiol (BSH) biosynthesis. May catalyze the last step of the pathway, the addition of cysteine to glucosamine malate (GlcN-Mal) to generate BSH. The protein is Putative cysteine ligase BshC of Bacillus velezensis (strain DSM 23117 / BGSC 10A6 / LMG 26770 / FZB42) (Bacillus amyloliquefaciens subsp. plantarum).